The sequence spans 347 residues: Phosphate acyltransferase (347 aa).

The protein belongs to the PlsX family. Homodimer. Probably interacts with PlsY.

Its subcellular location is the cytoplasm. The enzyme catalyses a fatty acyl-[ACP] + phosphate = an acyl phosphate + holo-[ACP]. It functions in the pathway lipid metabolism; phospholipid metabolism. Its function is as follows. Catalyzes the reversible formation of acyl-phosphate (acyl-PO(4)) from acyl-[acyl-carrier-protein] (acyl-ACP). This enzyme utilizes acyl-ACP as fatty acyl donor, but not acyl-CoA. The polypeptide is Phosphate acyltransferase (Anaplasma marginale (strain St. Maries)).